We begin with the raw amino-acid sequence, 66 residues long: Large ribosomal subunit protein uL29 (66 aa).

It belongs to the universal ribosomal protein uL29 family.

This is Large ribosomal subunit protein uL29 from Deinococcus deserti (strain DSM 17065 / CIP 109153 / LMG 22923 / VCD115).